The sequence spans 336 residues: tRNA N6-adenosine threonylcarbamoyltransferase (336 aa).

Positions 114 and 118 each coordinate Fe cation. Substrate-binding positions include 136 to 140, Asp169, Gly182, Asp186, and Asn275; that span reads LVSGG. Asp302 is a Fe cation binding site.

It belongs to the KAE1 / TsaD family. Fe(2+) is required as a cofactor.

It is found in the cytoplasm. The enzyme catalyses L-threonylcarbamoyladenylate + adenosine(37) in tRNA = N(6)-L-threonylcarbamoyladenosine(37) in tRNA + AMP + H(+). In terms of biological role, required for the formation of a threonylcarbamoyl group on adenosine at position 37 (t(6)A37) in tRNAs that read codons beginning with adenine. Is involved in the transfer of the threonylcarbamoyl moiety of threonylcarbamoyl-AMP (TC-AMP) to the N6 group of A37, together with TsaE and TsaB. TsaD likely plays a direct catalytic role in this reaction. In Streptococcus agalactiae serotype III (strain NEM316), this protein is tRNA N6-adenosine threonylcarbamoyltransferase.